The sequence spans 185 residues: MINTIKQDAKNRMEKTLSVYLSDVDGIRTGRARASVLDGIVVETYGGRVKLNTISSISVSDNKTLLVKVWEINNVGAIKTAIINSNLGFGFSCEGAVIRLTVPDMTQDMRKNLVKLLGKISEDCRISIRNIRRDIMDKLKIMQDNKDISEDDLRIAGVEIQKITDEIIKKINDTFLAKEKELLHV.

The protein belongs to the RRF family.

It localises to the cytoplasm. Functionally, responsible for the release of ribosomes from messenger RNA at the termination of protein biosynthesis. May increase the efficiency of translation by recycling ribosomes from one round of translation to another. The protein is Ribosome-recycling factor of Ehrlichia ruminantium (strain Welgevonden).